A 1395-amino-acid chain; its full sequence is Adventurous-gliding motility protein Z (1395 aa).

The 119-residue stretch at 4 to 122 (RVLIVESEHD…ELAALSHGIV (119 aa)) folds into the Response regulatory domain. 4-aspartylphosphate is present on aspartate 48. Disordered regions lie at residues 137–172 (LNGT…AMTE), 874–893 (AAES…GLRS), 919–947 (EQHA…ARAH), 1212–1249 (AAES…AAKQ), 1287–1312 (RYKS…EDDE), and 1326–1395 (AAAA…ELDK). A coiled-coil region spans residues 213–911 (EGKIQILRDE…LEQTHGQLAA (699 aa)). 2 stretches are compositionally biased toward basic and acidic residues: residues 919 to 928 (EQHAHQESRK) and 1228 to 1249 (QKER…AAKQ). Low complexity-rich tracts occupy residues 1291 to 1306 (KSAT…AKPA) and 1326 to 1352 (AAAA…KKAP). The span at 1382–1395 (EDDDWTALVDELDK) shows a compositional bias: acidic residues.

Interacts with MglA.

The protein localises to the cytoplasm. In terms of biological role, required for adventurous-gliding motility (A motility), in response to environmental signals sensed by the frz chemosensory system. Forms ordered clusters that span the cell length and that remain stationary relative to the surface across which the cells move, serving as anchor points (focal, transient adhesion sites) that allow the bacterium to move forward. Clusters disassemble at the lagging cell pole. The protein is Adventurous-gliding motility protein Z (aglZ) of Myxococcus xanthus (strain DK1622).